Consider the following 154-residue polypeptide: UPF0756 membrane protein YtwI (154 aa).

The next 4 helical transmembrane spans lie at 8 to 28, 54 to 74, 87 to 107, and 117 to 137; these read FLIL…LFAV, WGVT…EIGF, WIAL…LTLL, and LVIG…GPLI.

It belongs to the UPF0756 family.

It localises to the cell membrane. In Bacillus subtilis (strain 168), this protein is UPF0756 membrane protein YtwI (ytwI).